Reading from the N-terminus, the 587-residue chain is Kelch-like protein 3 (587 aa).

The tract at residues 1–24 (MEGESVKPSPQPTAQAEDEEKNRR) is disordered. Residues 50-117 (CDVMIVAEDV…IYTAEIEVTE (68 aa)) form the BTB domain. Residues 152–254 (CLGIRAFADV…PRDYLVQTVE (103 aa)) form the BACK domain. Residue Thr295 is modified to Phosphothreonine. Kelch repeat units lie at residues 302-347 (VMIV…FMAG), 348-394 (HVYA…VLND), 396-441 (LYAV…VVEG), 442-490 (KLYA…VLSG), 491-537 (QLYA…AVNG), and 539-585 (LYVV…VIHK). Position 375 is a phosphothreonine (Thr375). Ser376 and Ser433 each carry phosphoserine.

This sequence belongs to the KLHL3 family. As to quaternary structure, homodimer. Component of the BCR(KLHL3) E3 ubiquitin ligase complex, at least composed of CUL3 and KLHL3 and RBX1. Interacts with CLDN8. Post-translationally, phosphorylation at Ser-433 by PKA or PKC decreases the interaction with WNK1 and WNK4, leading to inhibit their degradation by the BCR(KLHL3) complex. Phosphorylated at Ser-433 by PKC in response to angiotensin II signaling, decreasing ability to promote degradation of WNK1 and WNK4, leading to activation of Na-Cl cotransporter SLC12A3/NCC. Phosphorylation at Ser-433 is increased by insulin. Dephosphorylated at Ser-433 by calcineurin PPP3CA, promoting degradation of WNK1 and WNK4. In terms of tissue distribution, present at high level in brain and kidney (at protein level). Weakly expressed in other tissues. In kidney, predominantly localizes to the distal convoluted tubule (DCT) and collecting duct, with apical localization in the DCT (at protein level).

It localises to the cytoplasm. The protein localises to the cytosol. The protein resides in the cytoskeleton. The protein operates within protein modification; protein ubiquitination. In terms of biological role, substrate-specific adapter of a BCR (BTB-CUL3-RBX1) E3 ubiquitin ligase complex that acts as a regulator of ion transport in the distal nephron. The BCR(KLHL3) complex acts by mediating ubiquitination and degradation of WNK1 and WNK4, two activators of Na-Cl cotransporter SLC12A3/NCC in distal convoluted tubule cells of kidney, thereby regulating NaCl reabsorption. The BCR(KLHL3) complex also mediates ubiquitination of CLDN8, a tight-junction protein required for paracellular chloride transport in the kidney, leading to its degradation. The sequence is that of Kelch-like protein 3 from Mus musculus (Mouse).